We begin with the raw amino-acid sequence, 342 residues long: Holliday junction branch migration complex subunit RuvB (342 aa).

The interval 1–182 is large ATPase domain (RuvB-L); the sequence is MRIEALNTAP…FGINSRLDYY (182 aa). ATP-binding positions include isoleucine 21, arginine 22, glycine 63, lysine 66, threonine 67, threonine 68, 129–131, arginine 172, tyrosine 182, and arginine 219; that span reads EDY. Threonine 67 provides a ligand contact to Mg(2+). A small ATPAse domain (RuvB-S) region spans residues 183–253; it reads SPELLQSIIV…VARRTLESLE (71 aa). The head domain (RuvB-H) stretch occupies residues 256 to 342; the sequence is EGGLDDMDKK…DHGPLFDHNS (87 aa). Residues arginine 311 and arginine 316 each coordinate DNA.

Belongs to the RuvB family. In terms of assembly, homohexamer. Forms an RuvA(8)-RuvB(12)-Holliday junction (HJ) complex. HJ DNA is sandwiched between 2 RuvA tetramers; dsDNA enters through RuvA and exits via RuvB. An RuvB hexamer assembles on each DNA strand where it exits the tetramer. Each RuvB hexamer is contacted by two RuvA subunits (via domain III) on 2 adjacent RuvB subunits; this complex drives branch migration. In the full resolvosome a probable DNA-RuvA(4)-RuvB(12)-RuvC(2) complex forms which resolves the HJ.

It is found in the cytoplasm. The catalysed reaction is ATP + H2O = ADP + phosphate + H(+). Its function is as follows. The RuvA-RuvB-RuvC complex processes Holliday junction (HJ) DNA during genetic recombination and DNA repair, while the RuvA-RuvB complex plays an important role in the rescue of blocked DNA replication forks via replication fork reversal (RFR). RuvA specifically binds to HJ cruciform DNA, conferring on it an open structure. The RuvB hexamer acts as an ATP-dependent pump, pulling dsDNA into and through the RuvAB complex. RuvB forms 2 homohexamers on either side of HJ DNA bound by 1 or 2 RuvA tetramers; 4 subunits per hexamer contact DNA at a time. Coordinated motions by a converter formed by DNA-disengaged RuvB subunits stimulates ATP hydrolysis and nucleotide exchange. Immobilization of the converter enables RuvB to convert the ATP-contained energy into a lever motion, pulling 2 nucleotides of DNA out of the RuvA tetramer per ATP hydrolyzed, thus driving DNA branch migration. The RuvB motors rotate together with the DNA substrate, which together with the progressing nucleotide cycle form the mechanistic basis for DNA recombination by continuous HJ branch migration. Branch migration allows RuvC to scan DNA until it finds its consensus sequence, where it cleaves and resolves cruciform DNA. This Chlorobaculum parvum (strain DSM 263 / NCIMB 8327) (Chlorobium vibrioforme subsp. thiosulfatophilum) protein is Holliday junction branch migration complex subunit RuvB.